Here is a 760-residue protein sequence, read N- to C-terminus: General transcription and DNA repair factor IIH helicase subunit XPD (760 aa).

Residues 7-283 (GLLVYFPYDY…KETDEQRLRD (277 aa)) form the Helicase ATP-binding domain. 42-49 (MPSGTGKT) is a binding site for ATP. Cys-116, Cys-134, Cys-155, and Cys-190 together coordinate [4Fe-4S] cluster. Residues 234–237 (DEAH) carry the DEAH box motif. The segment at 438-637 (MDASLAIKPV…TQSRILKARL (200 aa)) is mediates interaction with MMS19. Residues 682-695 (KRFARADKRGKLPR) carry the Nuclear localization signal motif.

This sequence belongs to the helicase family. RAD3/XPD subfamily. In terms of assembly, component of the 7-subunit TFIIH core complex composed of XPB/ERCC3, XPD/ERCC2, GTF2H1, GTF2H2, GTF2H3, GTF2H4 and GTF2H5, which is active in NER. The core complex associates with the 3-subunit CDK-activating kinase (CAK) module composed of CCNH/cyclin H, CDK7 and MNAT1 to form the 10-subunit holoenzyme (holo-TFIIH) active in transcription. The interaction with GTF2H2 results in the stimulation of the 5'--&gt;3' helicase activity. Component of the MMXD complex, which includes CIAO1, ERCC2, CIAO2B, MMS19 and SLC25A5. Interacts with CIAO1 and CIAO2B; the interaction WITH CIAO2B is direct. Interacts with ATF7IP. Interacts directly with MMS19. Part of TBP-based Pol II pre-initiation complex (PIC), in which Pol II core assembles with general transcription factors and other specific initiation factors including GTF2E1, GTF2E2, GTF2F1, GTF2F2, TCEA1, ERCC2, ERCC3, GTF2H2, GTF2H3, GTF2H4, GTF2H5, GTF2A1, GTF2A2, GTF2B and TBP; this large multi-subunit PIC complex mediates DNA unwinding and targets Pol II core to the transcription start site where the first phosphodiester bond forms. It depends on Mg(2+) as a cofactor. Requires [4Fe-4S] cluster as cofactor. In terms of processing, ISGylated.

The protein resides in the nucleus. Its subcellular location is the cytoplasm. The protein localises to the cytoskeleton. It is found in the spindle. It carries out the reaction Couples ATP hydrolysis with the unwinding of duplex DNA at the replication fork by translocating in the 5'-3' direction. This creates two antiparallel DNA single strands (ssDNA). The leading ssDNA polymer is the template for DNA polymerase III holoenzyme which synthesizes a continuous strand.. It catalyses the reaction ATP + H2O = ADP + phosphate + H(+). Functionally, ATP-dependent 5'-3' DNA helicase. Component of the general transcription and DNA repair factor IIH (TFIIH) core complex which is involved in general and transcription-coupled nucleotide excision repair (NER) of damaged DNA. When complexed to CDK-activating kinase (CAK), involved in transcription by RNA polymerase II. In NER, TFIIH acts by opening DNA around the lesion to allow the excision of the damaged oligonucleotide and its replacement by a new DNA fragment. The ATP-dependent helicase activity of XPD/ERCC2 is required for DNA opening. In transcription, TFIIH has an essential role in transcription initiation. When the pre-initiation complex (PIC) has been established, TFIIH is required for promoter opening and promoter escape. Phosphorylation of the C-terminal tail (CTD) of the largest subunit of RNA polymerase II by the kinase module CAK controls the initiation of transcription. XPD/ERCC2 acts by forming a bridge between CAK and the core-TFIIH complex. Involved in the regulation of vitamin-D receptor activity. As part of the mitotic spindle-associated MMXD complex it plays a role in chromosome segregation. Might have a role in aging process and could play a causative role in the generation of skin cancers. This is General transcription and DNA repair factor IIH helicase subunit XPD from Cricetulus griseus (Chinese hamster).